The sequence spans 289 residues: uncharacterized protein (289 aa).

The segment covering Pro80–Asn96 has biased composition (polar residues). Disordered stretches follow at residues Pro80 to Tyr101 and Pro136 to Glu157.

This is an uncharacterized protein from Acanthamoeba polyphaga (Amoeba).